We begin with the raw amino-acid sequence, 159 residues long: Ribosome maturation factor RimP (159 aa).

This sequence belongs to the RimP family.

Its subcellular location is the cytoplasm. In terms of biological role, required for maturation of 30S ribosomal subunits. The protein is Ribosome maturation factor RimP of Lacticaseibacillus casei (strain BL23) (Lactobacillus casei).